The primary structure comprises 100 residues: ATP-dependent Clp protease adapter protein ClpS (100 aa).

The protein belongs to the ClpS family. As to quaternary structure, binds to the N-terminal domain of the chaperone ClpA.

Involved in the modulation of the specificity of the ClpAP-mediated ATP-dependent protein degradation. The sequence is that of ATP-dependent Clp protease adapter protein ClpS from Corynebacterium glutamicum (strain R).